The chain runs to 179 residues: Protein GrpE (179 aa).

Residues 1–20 are disordered; the sequence is MSEETKEEIKNEKVDEEVTE.

The protein belongs to the GrpE family. In terms of assembly, homodimer.

Its subcellular location is the cytoplasm. In terms of biological role, participates actively in the response to hyperosmotic and heat shock by preventing the aggregation of stress-denatured proteins, in association with DnaK and GrpE. It is the nucleotide exchange factor for DnaK and may function as a thermosensor. Unfolded proteins bind initially to DnaJ; upon interaction with the DnaJ-bound protein, DnaK hydrolyzes its bound ATP, resulting in the formation of a stable complex. GrpE releases ADP from DnaK; ATP binding to DnaK triggers the release of the substrate protein, thus completing the reaction cycle. Several rounds of ATP-dependent interactions between DnaJ, DnaK and GrpE are required for fully efficient folding. The chain is Protein GrpE from Lactococcus lactis subsp. cremoris (strain MG1363).